A 531-amino-acid chain; its full sequence is T-complex protein 1 subunit zeta-2 (531 aa).

Belongs to the TCP-1 chaperonin family. In terms of assembly, component of the chaperonin-containing T-complex (TRiC), a heterooligomeric complex of about 850 to 900 kDa that forms two stacked rings, 12 to 16 nm in diameter. Testis specific.

The protein resides in the cytoplasm. Functionally, component of the chaperonin-containing T-complex (TRiC), a molecular chaperone complex that assists the folding of proteins upon ATP hydrolysis. The sequence is that of T-complex protein 1 subunit zeta-2 (Cct6b) from Mus musculus (Mouse).